Consider the following 160-residue polypeptide: Cytochrome b6-f complex subunit 4 (160 aa).

A run of 3 helical transmembrane segments spans residues 36-56 (LLYV…ALAV), 95-115 (LLGI…PFIE), and 131-151 (AVFL…TFPI).

The protein belongs to the cytochrome b family. PetD subfamily. The 4 large subunits of the cytochrome b6-f complex are cytochrome b6, subunit IV (17 kDa polypeptide, PetD), cytochrome f and the Rieske protein, while the 4 small subunits are PetG, PetL, PetM and PetN. The complex functions as a dimer.

The protein resides in the cellular thylakoid membrane. In terms of biological role, component of the cytochrome b6-f complex, which mediates electron transfer between photosystem II (PSII) and photosystem I (PSI), cyclic electron flow around PSI, and state transitions. This chain is Cytochrome b6-f complex subunit 4, found in Rippkaea orientalis (strain PCC 8801 / RF-1) (Cyanothece sp. (strain PCC 8801)).